Consider the following 410-residue polypeptide: Thyroid hormone receptor alpha (410 aa).

Positions 1–32 are disordered; the sequence is MEQKPSKVECGSDPEESSTRSPDGKRKRKNGQ. Residues 1-52 form a modulating region; the sequence is MEQKPSKVECGSDPEESSTRSPDGKRKRKNGQCSLKTSMSGYIPSYLDKDEQ. Residues cysteine 53, cysteine 56, cysteine 70, cysteine 73, cysteine 91, cysteine 97, cysteine 107, and cysteine 110 each coordinate Zn(2+). 2 consecutive NR C4-type zinc fingers follow at residues 53-73 and 91-115; these read CVVC…CEGC and CKYD…FKKC. Residues 53 to 127 constitute a DNA-binding region (nuclear receptor); the sequence is CVVCGDKATG…VGMAMDLVLD (75 aa). The region spanning 163-407 is the NR LBD domain; that stretch reads EEWDLIHVAT…PPLFLEVFED (245 aa). 2 residues coordinate 3,3',5-triiodo-L-thyronine: arginine 228 and serine 277.

This sequence belongs to the nuclear hormone receptor family. NR1 subfamily. As to quaternary structure, binds DNA as a dimer; homodimer and heterodimer with RXRB. Interacts with NCOA3 and NCOA6 coactivators, leading to a strong increase of transcription of target genes. Probably interacts with SFPQ. Interacts with C1D. Interacts with AKAP13. Interacts with TP53INP2. Interacts with PER2. Interacts with TACC1. The interaction with isoform alpha-1, but not alpha-2, is decreased in the presence of thyroid hormone T3.

Its subcellular location is the nucleus. The protein resides in the cytoplasm. Nuclear hormone receptor that can act as a repressor or activator of transcription. High affinity receptor for thyroid hormones, including triiodothyronine and thyroxine. The sequence is that of Thyroid hormone receptor alpha (THRA) from Ovis aries (Sheep).